Here is a 119-residue protein sequence, read N- to C-terminus: MFKKQSRQKGREKRHLRIRKNIFGTPEMPRLSVYRSEKNIYAQIIDDLNGVTLVAASSLDKEFDAKGSNKDGAKLVGELVAKRAIEKGVTKVVFDRGGYIYHGRVQELAEGAREAGLQF.

This sequence belongs to the universal ribosomal protein uL18 family. As to quaternary structure, part of the 50S ribosomal subunit; part of the 5S rRNA/L5/L18/L25 subcomplex. Contacts the 5S and 23S rRNAs.

Functionally, this is one of the proteins that bind and probably mediate the attachment of the 5S RNA into the large ribosomal subunit, where it forms part of the central protuberance. The sequence is that of Large ribosomal subunit protein uL18 from Clostridium tetani (strain Massachusetts / E88).